Reading from the N-terminus, the 512-residue chain is GMP synthase [glutamine-hydrolyzing] (512 aa).

The Glutamine amidotransferase type-1 domain occupies 7–197 (TIIVLDFGSQ…VFGVCGCSEG (191 aa)). Cysteine 84 acts as the Nucleophile in catalysis. Residues histidine 171 and glutamate 173 contribute to the active site. Residues 198 to 387 (WNMENFIEVE…LGIPDEIVWR (190 aa)) enclose the GMPS ATP-PPase domain. 225–231 (SGGVDSS) provides a ligand contact to ATP.

Homodimer.

It carries out the reaction XMP + L-glutamine + ATP + H2O = GMP + L-glutamate + AMP + diphosphate + 2 H(+). It functions in the pathway purine metabolism; GMP biosynthesis; GMP from XMP (L-Gln route): step 1/1. Its function is as follows. Catalyzes the synthesis of GMP from XMP. This chain is GMP synthase [glutamine-hydrolyzing], found in Bacillus cereus (strain ATCC 10987 / NRS 248).